We begin with the raw amino-acid sequence, 288 residues long: 2-dehydro-3-deoxyphosphooctonate aldolase (288 aa).

This sequence belongs to the KdsA family.

The protein resides in the cytoplasm. It carries out the reaction D-arabinose 5-phosphate + phosphoenolpyruvate + H2O = 3-deoxy-alpha-D-manno-2-octulosonate-8-phosphate + phosphate. It participates in carbohydrate biosynthesis; 3-deoxy-D-manno-octulosonate biosynthesis; 3-deoxy-D-manno-octulosonate from D-ribulose 5-phosphate: step 2/3. It functions in the pathway bacterial outer membrane biogenesis; lipopolysaccharide biosynthesis. The polypeptide is 2-dehydro-3-deoxyphosphooctonate aldolase (Bdellovibrio bacteriovorus (strain ATCC 15356 / DSM 50701 / NCIMB 9529 / HD100)).